A 590-amino-acid polypeptide reads, in one-letter code: J protein JJJ1 (590 aa).

Residues 3-72 enclose the J domain; sequence TCYYELLGVE…RAWYDSHKEQ (70 aa). Basic and acidic residues predominate over residues 269 to 284; it reads EQRKLKEQQRKNELNN. Positions 269–293 are disordered; the sequence is EQRKLKEQQRKNELNNRRKFGNDNN. The C2H2-type 1 zinc finger occupies 338–362; that stretch reads YECFICNKTFKSEKQLKNHINTKLH. Ser393 carries the post-translational modification Phosphoserine. Positions 441–546 are disordered; it reads EVEDVSSDEN…TLPSSMSPTS (106 aa). Positions 455 to 467 are enriched in basic residues; that stretch reads TKNKKKRKKKKKA. A compositionally biased stretch (basic and acidic residues) spans 480–489; the sequence is DDTKDKRSNE. A Phosphothreonine modification is found at Thr504. Over residues 513–527 the composition is skewed to basic residues; that stretch reads KAKKKKGKQPKKNSK. A compositionally biased stretch (low complexity) spans 528 to 546; that stretch reads STKSTPSLSTLPSSMSPTS. A C2H2-type 2 zinc finger spans residues 549-573; it reads EVCTTCGESFDSRNKLFNHVKIAGH.

The protein localises to the nucleus. This is J protein JJJ1 (JJJ1) from Saccharomyces cerevisiae (strain ATCC 204508 / S288c) (Baker's yeast).